The following is a 2412-amino-acid chain: MEQTLAQAVSRRGKTNTPMAEERKPFSPMNFSANFVAPELFYSANVRKIKNIFRERSTTRFLDAISSDFELVAFLTLSPAHLMQLETTLRQEIRSCVVPIVTSDASFETVAVIKTALDGMRFHFGHTTLEKGWMSMMRHAESCLQESSSSAVNDLQMQIKRVGSLLLSGKNRVESCELSVLNLTARRFRIEYGLNGTYFGEHVAMLLDLKRYIYGTVPKEFCWAKTKKHSLFTTPKWIKRTPIDCFLFCLRVIPILHRFGVAISLLYWSCVAALNFPAFMAFLFKRQFAKYLAHSFAKHSIYFIFLTIIAILWSFRTFASQKPKIVLQARSTAEKEKKLMMILASVVGITYLFDYDIAEALGNCLHKISRLSSYLLDDHQGIASRMFGASYGLQAGDSAEDAVTTIISDLLSVTFKIVDEDASQGTVEDASETTFHSWVGVNTLAGRNMSRPLQYDVNKTYALTPQNVQLQARAMADANNCWSMVVGHTGSGKSTYLPVQYSNYLSTKSDRRQQILICEPTQAATENVCAGVAANLGRAVYGRHEGWSRMGDHCIQVMTYGSALQCHAMDPSFISTFDAIFLDEAHDVKEHSLVFESICDTFKSVRKFYVSATPRDGSVCPEAARKYPLHVETSVCDSYRKFIAAQGGGDLLDISKHDTALVFLAGRPECIKAANAWNASVTGEKRAFPLSSDNFATDFSMLTERLKTHKTIIFTTNIIETGVTLSVDCVVDFGHTMRPCLDLNQKSLRLDRRRVTRNERQQRIGRAGRLKDGYAIVCGDVDRAVNVISPDVLYGAALLSFKHNVPFYMNETFESSWLEGVTKAQADTMTIFKLPIFLTRDLINADGSVAREFLDVLKKHQFTTSDIKQAPSVTAKHIFPTWASYFSLHQALHYGDDKDEIPHELRYARVPFSVTTLSKFDWPALALACEKHRASMSNVFAGIEEPARVVTLQTNPANIQASITHLTHMSKNYKTLIENNQHVRQSMMTNVMFKWFSSTRITKDLDRNLRRCTDNLSVVEATLSSLRQILAGNTQVHATPHMQSTLEDIIELQASDTLTEESLANALGIFVPKCNLFLLLATKGFKLVYVVCILLLVNLVYTGLRKWREHLKQKGSNEILTNTMPVSEGGEILAEVMKMEPKMRKNIKRDMDAAVESKLCGFTFVFPDDDKIGLEGKGNKYRPREDARLMYSTREDATFDAWNEKAKERRKKVTDKAEPELRRAYEKRPYFNFYDLQTDSNILEAIFYTTEGDEFFRTADPNRDMNLVADKLRSFLDTKLVVGHHQRKLLEETANVVIKDTKGTAHKMEISQHDPDFLKQNGSGKVGYPEHRGQFRQEGVAVTGDYDLEAEFGTDTDEISFGASTGILLSQVGVDVATRVGRICIGTFNMNCYFYSDWILVPGHLQDRSGNVTIQFPDQTVQTTTDALNANGVKRFYGLDVIAIRRPAILRPRTKLVKAFAIEEPVIAQMVFVDAQGVRKFTQSDWARKEENSGRWSHKISTVLGMCGCPVLDVGKNRLIGIHVATNYTKKRNEFQPFTQEVVDFINGPGTKIPYCPWVFDRPACGYSSHNALFEKPTTLADVIHMQASDGLHNINNAIEGFGSSLKGQLVSPPTESTRQRFDKLFGSGSFELIGQMNKGLIDKHVIVGENDDVYDFMREHPTFTWLKDFMNEYAPSVLSYSAYYKDLCKYNRAKHVLTYNPEELHCATKGLIKMLEDAGLTQGSVRTPQQVVSDIQWNTSAGPSYQGKKRDLCAHLSDDEVLHLAEVCRQQFLEGKSTGVWNGSLKAELRTIEKVEAEKTRVFTASPITSLFAMKFYVDDFNKKFYATNLKAPHTVGINKFGRGWEKLHDKLNRPGWLHGSGDGSRFDSSIDPFFFDVVKTIRKHFLPSEHHKAIDLIYDEILNTTICLANGMVIRKNVGNNSGQPSTVVDNTLVLMTAFLYAYIHKTGDRELALLNERFIFVCNGDDNKFAISPQFDEEFGHDFSPELVELGLTYEFDDITSDICENPYMSLTMVKTPFGVGFSLPVERIIAIMQWSKKGGVLHSYLAGISAIYESFNTPKLFKSIYAYLLWLTEEHEAEILAAMTQSSTALPIPSMLDVYRLHYGDDEIWLQAADPLTDAQKEAAHTAAADRARLDLADADRRRKVEADRVEAARVKKAADAVLKPVTLTATRMPTEDDGKLKTPSGARIPSSAADGNWSVPATKQVNAGLTLKIPLNKLKSVPKSVMEHNNSVALESELKAWTDAVRTSLGITTDEAWIDALIPFIGWCCNNGTSDKHAENQVMQIDSGKGAVTEMSLSPFIVHARMNGGLRRIMRNYSDETVLLITNNKLVAHWSMKHGASANAKYAFDFFVPRSWMNPQDIEVSKQARLAALGTGTYNTMLTSDTTNLRKTTNHRVLDSDGHPELT.

The segment at 1–23 (MEQTLAQAVSRRGKTNTPMAEER) is disordered. The region spanning 474-632 (AMADANNCWS…AARKYPLHVE (159 aa)) is the Helicase ATP-binding domain. 487 to 494 (GHTGSGKS) contributes to the ATP binding site. Positions 647 to 813 (GGGDLLDISK…NVPFYMNETF (167 aa)) constitute a Helicase C-terminal domain. Y1234 carries the O-(5'-phospho-RNA)-tyrosine modification. The region spanning 1359 to 1574 (ISFGASTGIL…CGYSSHNALF (216 aa)) is the Peptidase C4 domain. Active-site for nuclear inclusion protein A activity residues include H1404, D1440, and C1507. Residues 1858 to 1982 (WLHGSGDGSR…AISPQFDEEF (125 aa)) form the RdRp catalytic domain. The tract at residues 2178 to 2202 (PTEDDGKLKTPSGARIPSSAADGNW) is disordered.

The protein belongs to the bymoviruses polyprotein 1 family. VPg is uridylylated by the polymerase and is covalently attached to the 5'-end of the genomic RNA. This uridylylated form acts as a nucleotide-peptide primer for the polymerase. Post-translationally, the viral RNA1 of bymoviruses is expressed as a single polyprotein which undergoes post-translational proteolytic processing by the main proteinase NIa-pro resulting in the production of at least eight individual proteins.

It is found in the host cytoplasmic vesicle. The protein localises to the virion. The catalysed reaction is RNA(n) + a ribonucleoside 5'-triphosphate = RNA(n+1) + diphosphate. It catalyses the reaction Hydrolyzes glutaminyl bonds, and activity is further restricted by preferences for the amino acids in P6 - P1' that vary with the species of potyvirus, e.g. Glu-Xaa-Xaa-Tyr-Xaa-Gln-|-(Ser or Gly) for the enzyme from tobacco etch virus. The natural substrate is the viral polyprotein, but other proteins and oligopeptides containing the appropriate consensus sequence are also cleaved.. In terms of biological role, indispensable for virus replication. Mediates the cap-independent, EIF4E-dependent translation of viral genomic RNAs. Binds to the cap-binding site of host EIF4E and thus interferes with the host EIF4E-dependent mRNA export and translation. VPg-RNA directly binds EIF4E and is a template for transcription. Also forms trimeric complexes with EIF4E-EIF4G, which are templates for translation. Its function is as follows. Has RNA-binding and proteolytic activities. Functionally, an RNA-dependent RNA polymerase that plays an essential role in the virus replication. The protein is Genome polyprotein 1 of Hordeum vulgare (Barley).